We begin with the raw amino-acid sequence, 457 residues long: Cysteine--tRNA ligase (457 aa).

Cys-28 contacts Zn(2+). Positions 30-40 match the 'HIGH' region motif; that stretch reads PTVYDTAHIGN. Positions 212, 237, and 241 each coordinate Zn(2+). The short motif at 270 to 274 is the 'KMSKS' region element; sequence KMSKS. Lys-273 is a binding site for ATP.

The protein belongs to the class-I aminoacyl-tRNA synthetase family. In terms of assembly, monomer. The cofactor is Zn(2+).

The protein localises to the cytoplasm. It carries out the reaction tRNA(Cys) + L-cysteine + ATP = L-cysteinyl-tRNA(Cys) + AMP + diphosphate. In Wolbachia sp. subsp. Drosophila simulans (strain wRi), this protein is Cysteine--tRNA ligase.